Reading from the N-terminus, the 393-residue chain is Major outer membrane porin, serovar D (393 aa).

The first 22 residues, 1-22 (MKKLLKSVLVFAALSSASSLQA), serve as a signal peptide directing secretion.

It belongs to the chlamydial porin (CP) (TC 1.B.2) family. In terms of assembly, part of a disulfide cross-linked outer membrane complex (COMC) composed of the major outer membrane porin (MOMP), the small cysteine-rich protein (OmcA) and the large cysteine-rich periplasmic protein (OmcB).

Its subcellular location is the cell outer membrane. In terms of biological role, in elementary bodies (EBs, the infectious stage, which is able to survive outside the host cell) provides the structural integrity of the outer envelope through disulfide cross-links with the small cysteine-rich protein and the large cysteine-rich periplasmic protein. It has been described in publications as the Sarkosyl-insoluble COMC (Chlamydia outer membrane complex), and serves as the functional equivalent of peptidoglycan. Its function is as follows. Permits diffusion of specific solutes through the outer membrane. The chain is Major outer membrane porin, serovar D (ompA) from Chlamydia trachomatis serovar D (strain ATCC VR-885 / DSM 19411 / UW-3/Cx).